Consider the following 208-residue polypeptide: NAD(P)H-hydrate epimerase (208 aa).

Residues 10–208 (IRDAERQTLA…TLGVIMTPAN (199 aa)) enclose the YjeF N-terminal domain. 54-58 (NNGGD) serves as a coordination point for (6S)-NADPHX. The K(+) site is built by asparagine 55 and aspartate 117. (6S)-NADPHX is bound by residues 121-127 (GIGLNRP) and aspartate 150. Serine 153 contacts K(+).

The protein belongs to the NnrE/AIBP family. K(+) is required as a cofactor.

It catalyses the reaction (6R)-NADHX = (6S)-NADHX. It carries out the reaction (6R)-NADPHX = (6S)-NADPHX. In terms of biological role, catalyzes the epimerization of the S- and R-forms of NAD(P)HX, a damaged form of NAD(P)H that is a result of enzymatic or heat-dependent hydration. This is a prerequisite for the S-specific NAD(P)H-hydrate dehydratase to allow the repair of both epimers of NAD(P)HX. This Achromobacter xylosoxidans (strain A8) protein is NAD(P)H-hydrate epimerase.